Consider the following 496-residue polypeptide: Fatty acyl-CoA reductase 8 (496 aa).

It belongs to the fatty acyl-CoA reductase family.

It carries out the reaction a long-chain fatty acyl-CoA + 2 NADPH + 2 H(+) = a long-chain primary fatty alcohol + 2 NADP(+) + CoA. Its function is as follows. Catalyzes the reduction of fatty acyl-CoA to fatty alcohols. Catalyzes specifically the formation of C16:0 fatty alcohol. The protein is Fatty acyl-CoA reductase 8 (FAR8) of Arabidopsis thaliana (Mouse-ear cress).